Reading from the N-terminus, the 327-residue chain is DNA-directed RNA polymerase subunit alpha (327 aa).

The segment at 1-233 (MVREKVKVST…NLFIPFLHVE (233 aa)) is alpha N-terminal domain (alpha-NTD). Positions 267-327 (LAFQYIFIDQ…KKILDILEKK (61 aa)) are alpha C-terminal domain (alpha-CTD).

It belongs to the RNA polymerase alpha chain family. In terms of assembly, in plastids the minimal PEP RNA polymerase catalytic core is composed of four subunits: alpha, beta, beta', and beta''. When a (nuclear-encoded) sigma factor is associated with the core the holoenzyme is formed, which can initiate transcription.

It localises to the plastid. The protein localises to the chloroplast. It carries out the reaction RNA(n) + a ribonucleoside 5'-triphosphate = RNA(n+1) + diphosphate. Functionally, DNA-dependent RNA polymerase catalyzes the transcription of DNA into RNA using the four ribonucleoside triphosphates as substrates. The polypeptide is DNA-directed RNA polymerase subunit alpha (Lobularia maritima (Sweet alyssum)).